A 278-amino-acid chain; its full sequence is Elongation factor Ts (278 aa).

Positions threonine 80–valine 83 are involved in Mg(2+) ion dislocation from EF-Tu.

This sequence belongs to the EF-Ts family.

The protein resides in the cytoplasm. Functionally, associates with the EF-Tu.GDP complex and induces the exchange of GDP to GTP. It remains bound to the aminoacyl-tRNA.EF-Tu.GTP complex up to the GTP hydrolysis stage on the ribosome. In Micrococcus luteus (strain ATCC 4698 / DSM 20030 / JCM 1464 / CCM 169 / CCUG 5858 / IAM 1056 / NBRC 3333 / NCIMB 9278 / NCTC 2665 / VKM Ac-2230) (Micrococcus lysodeikticus), this protein is Elongation factor Ts.